The primary structure comprises 432 residues: Glial fibrillary acidic protein (432 aa).

The interval 1 to 72 is head; it reads MERRRITSAA…KETRASERAE (72 aa). T7 bears the Phosphothreonine; by AURKB and ROCK1 mark. R12 is subject to Omega-N-methylarginine. S13 bears the Phosphoserine; by AURKB and ROCK1 mark. Citrulline is present on residues R30 and R36. S38 is modified (phosphoserine; by AURKB and ROCK1). One can recognise an IF rod domain in the interval 69–377; that stretch reads ERAEMMELND…KLLEGEENRI (309 aa). The segment at 73 to 104 is coil 1A; the sequence is MMELNDRFASYIEKVRFLEQQNKALAAELNQL. At S82 the chain carries Phosphoserine. The tract at residues 105-115 is linker 1; the sequence is RAKEPTKLADV. A phosphothreonine mark is found at T110 and T150. The segment at 116–214 is coil 1B; it reads YQAELRELRL…EEEVRELQEQ (99 aa). Positions 215–230 are linker 12; sequence LARQQVHVELDMAKPD. A coil 2A region spans residues 231 to 252; sequence LTAALKEIRTQYEAMASSNMHE. The tract at residues 253–256 is linker 2; the sequence is AEEW. Residues 257–377 form a coil 2B region; sequence YRSKFADLTD…KLLEGEENRI (121 aa). Residue R270 is modified to Citrulline. A Phosphoserine modification is found at S323. A tail region spans residues 378 to 432; the sequence is TIPVQTFSNLQIRETSLDTKSVSEGHLKRNIVVKTVEMRDGEVIKESKQEHKDVM. T383 is modified (phosphothreonine). Phosphoserine is present on S385. R406 and R416 each carry citrulline.

It belongs to the intermediate filament family. In terms of assembly, interacts with SYNM. Post-translationally, phosphorylated by PKN1.

It localises to the cytoplasm. GFAP, a class-III intermediate filament, is a cell-specific marker that, during the development of the central nervous system, distinguishes astrocytes from other glial cells. In Pongo abelii (Sumatran orangutan), this protein is Glial fibrillary acidic protein (GFAP).